We begin with the raw amino-acid sequence, 922 residues long: Band 3 anion transport protein (922 aa).

2 disordered regions span residues 1–36 (MEGP…TMSN) and 355–389 (QHPD…LRTR). Residues 1–416 (MEGPGQDTED…LSDIRDALNP (416 aa)) lie on the Cytoplasmic side of the membrane. Over residues 10–26 (DALRRSLDPEGYEDTKG) the composition is skewed to basic and acidic residues. Over residues 27–36 (SRTSLGTMSN) the composition is skewed to polar residues. The chain crosses the membrane as a helical span at residues 417–440 (QCLAAVIFIYFAALSPAITFGGLL). Residues 441 to 448 (GEKTRGMM) lie on the Extracellular side of the membrane. A helical membrane pass occupies residues 449–469 (GVSELLLSTSVQCLLFSLLSA). Topologically, residues 470 to 472 (QPL) are cytoplasmic. The discontinuously helical transmembrane segment at 473–489 (LVVGFSGPLLVFEEAFF) threads the bilayer. Residues 490–498 (RFCEDHGLE) are Extracellular-facing. Residues 499-519 (YIVGRVWIGFWLILLVLLVVA) traverse the membrane as a helical segment. Over 520–531 (CEGTVLVRYLSR) the chain is Cytoplasmic. The helical transmembrane segment at 532-554 (YTQEIFSFLISLIFIYETFAKLV) threads the bilayer. Topologically, residues 555–581 (TIFEAHPLQQSYDTDVSTEPSVPKPNT) are extracellular. A helical membrane pass occupies residues 582–602 (ALLSLVLMAGTFFLALFLRQF). At 603 to 613 (KNSVFLPGKVR) the chain is on the cytoplasmic side. Residues 614-634 (RLIGDFGVPISIFVMALADFF) form a helical membrane-spanning segment. The Extracellular portion of the chain corresponds to 635–674 (IKDTYTQKLKVPRGLEVTNGTARGWFIHPMGSATPFPIWM). A glycan (N-linked (GlcNAc...) asparagine) is linked at Asn-653. A helical transmembrane segment spans residues 675–695 (MFASPVPALLVFILIFLETQI). Topologically, residues 696 to 711 (TTLIVSKPERKLVKGS) are cytoplasmic. The helical transmembrane segment at 712-730 (GFHLDLLLIVAMGGLAALF) threads the bilayer. Residues 731-748 (GMPWLSATTVRTITHANA) traverse the membrane as a discontinuously helical segment. The Cytoplasmic portion of the chain corresponds to 749-771 (LTVVGKSAVPGERAHIVEVKEQR). The next 2 membrane-spanning stretches (helical) occupy residues 772 to 792 (LSGL…PILK) and 793 to 811 (YIPL…VTSL). At 812–849 (FGIQLFDRILLLLMPPKYHPKEPYVTRVKTWRITSSPL) the chain is on the cytoplasmic side. Positions 850–880 (TQILVVALLWGVKVSPASLRCPFVLVLTVPL) form an intramembrane region, discontinuously helical. The Cytoplasmic segment spans residues 881-922 (RRLLLPRIFSEIELKCLDTDDAVVTFEEAEGQDVYNEVQMPS).

The protein belongs to the anion exchanger (TC 2.A.31) family. In terms of assembly, a dimer in solution, it spans the membrane asymmetrically and appears to be tetrameric. As to expression, erythrocytes.

The protein localises to the cell membrane. It localises to the basolateral cell membrane. The enzyme catalyses hydrogencarbonate(in) + chloride(out) = hydrogencarbonate(out) + chloride(in). Its function is as follows. Functions both as a transporter that mediates electroneutral anion exchange across the cell membrane and as a structural protein. Major integral membrane glycoprotein of the erythrocyte membrane; required for normal flexibility and stability of the erythrocyte membrane and for normal erythrocyte shape via the interactions of its cytoplasmic domain with cytoskeletal proteins, glycolytic enzymes, and hemoglobin. Functions as a transporter that mediates the 1:1 exchange of inorganic anions across the erythrocyte membrane. Mediates chloride-bicarbonate exchange in the kidney, and is required for normal acidification of the urine. This chain is Band 3 anion transport protein (SLC4A1), found in Gallus gallus (Chicken).